The following is a 264-amino-acid chain: Glutamate racemase (264 aa).

Residues 10–11 and 42–43 each bind substrate; these read DS and YG. Cysteine 73 serves as the catalytic Proton donor/acceptor. 74–75 is a binding site for substrate; it reads NT. Residue cysteine 183 is the Proton donor/acceptor of the active site. Residue 184–185 coordinates substrate; it reads TH.

The protein belongs to the aspartate/glutamate racemases family.

The enzyme catalyses L-glutamate = D-glutamate. Its pathway is cell wall biogenesis; peptidoglycan biosynthesis. Its function is as follows. Provides the (R)-glutamate required for cell wall biosynthesis. The polypeptide is Glutamate racemase (Streptococcus agalactiae serotype Ia (strain ATCC 27591 / A909 / CDC SS700)).